The chain runs to 171 residues: Glutathione peroxidase-like peroxiredoxin GPX3 (171 aa).

Cys43 (cysteine sulfenic acid (-SOH) intermediate) is an active-site residue. An intrachain disulfide couples Cys43 to Cys89.

The protein belongs to the glutathione peroxidase family. In terms of assembly, interacts with CAP1 and probably YBP1.

The enzyme catalyses a hydroperoxide + [thioredoxin]-dithiol = an alcohol + [thioredoxin]-disulfide + H2O. Functionally, involved in oxidative stress response and redox homeostasis. Functions as a sensor and transducer of hydroperoxide stress. In response to hydroperoxide stress it oxidizes (activates) the transcription activator CAP1, which is involved in transcription activation of genes of the oxidative stress response pathway. May also play a direct role in hydroperoxide scavenging. The enzyme is not required for the glutaredoxin-mediated antioxidant function. In the presence of peroxides, GPX3 is directly oxidized at Cys-43 to form a cysteine sulfenic acid (-SOH). Cys-43-SOH then forms either an intramolecular disulfide bond (Cys-43 with Cys-89) or a transient, intermolecular disulfide bond with 'Cys-446' of CAP1, which is further resolved into a CAP1 intramolecular disulfide bond ('Cys-303' with 'Cys-598'), which causes its nuclear accumulation and activation, and a reduced Cys-43 in GPX3. Required for C.albicans-mediated macrophage killing. In Candida albicans (strain SC5314 / ATCC MYA-2876) (Yeast), this protein is Glutathione peroxidase-like peroxiredoxin GPX3.